The primary structure comprises 570 residues: Sulfite reductase [NADPH] hemoprotein beta-component (570 aa).

Positions 434, 440, 479, and 483 each coordinate [4Fe-4S] cluster. Cysteine 483 contacts siroheme.

Belongs to the nitrite and sulfite reductase 4Fe-4S domain family. Alpha(8)-beta(8). The alpha component is a flavoprotein, the beta component is a hemoprotein. Requires siroheme as cofactor. It depends on [4Fe-4S] cluster as a cofactor.

The enzyme catalyses hydrogen sulfide + 3 NADP(+) + 3 H2O = sulfite + 3 NADPH + 4 H(+). It participates in sulfur metabolism; hydrogen sulfide biosynthesis; hydrogen sulfide from sulfite (NADPH route): step 1/1. Functionally, component of the sulfite reductase complex that catalyzes the 6-electron reduction of sulfite to sulfide. This is one of several activities required for the biosynthesis of L-cysteine from sulfate. This Shigella boydii serotype 4 (strain Sb227) protein is Sulfite reductase [NADPH] hemoprotein beta-component.